A 296-amino-acid polypeptide reads, in one-letter code: Polyamine aminopropyltransferase (296 aa).

In terms of domain architecture, PABS spans 16 to 251; sequence HLWYFEYYTG…GMWSYTFASK (236 aa). Position 46 (Q46) interacts with S-methyl-5'-thioadenosine. Spermidine contacts are provided by H77 and D101. Residues E121 and 152-153 contribute to the S-methyl-5'-thioadenosine site; that span reads NG. The active-site Proton acceptor is the D170. 170-173 provides a ligand contact to spermidine; the sequence is DSTD.

Belongs to the spermidine/spermine synthase family. Homodimer or homotetramer.

It is found in the cytoplasm. It catalyses the reaction S-adenosyl 3-(methylsulfanyl)propylamine + putrescine = S-methyl-5'-thioadenosine + spermidine + H(+). It functions in the pathway amine and polyamine biosynthesis; spermidine biosynthesis; spermidine from putrescine: step 1/1. In terms of biological role, catalyzes the irreversible transfer of a propylamine group from the amino donor S-adenosylmethioninamine (decarboxy-AdoMet) to putrescine (1,4-diaminobutane) to yield spermidine. The sequence is that of Polyamine aminopropyltransferase from Thermotoga petrophila (strain ATCC BAA-488 / DSM 13995 / JCM 10881 / RKU-1).